Here is a 152-residue protein sequence, read N- to C-terminus: Prostaglandin E synthase (152 aa).

At 1–12 the chain is on the lumenal side; it reads MPAHSLVMSSPA. Residues 13–41 form a helical membrane-spanning segment; it reads LPAFLLCSTLLVIKMYVVAIITGQVRLRK. R38 is a glutathione binding site. The Cytoplasmic segment spans residues 42–60; it reads KAFANPEDALRHGGPQYCR. A helical membrane pass occupies residues 61-90; that stretch reads SDPDVERCLRAHRNDMETIYPFLFLGFVYS. 73 to 77 lines the glutathione pocket; sequence RNDME. Residues 91–95 are Lumenal-facing; that stretch reads FLGPN. Residues 96-119 traverse the membrane as a helical segment; sequence PFVAWMHFLVFLVGRVAHTVAYLG. Residues H113 and Y117 each contribute to the glutathione site. The Cytoplasmic portion of the chain corresponds to 120–123; it reads KLRA. A helical transmembrane segment spans residues 124–152; sequence PIRSVTYTLAQLPCASMALQILWEAARHL. Glutathione is bound at residue 126-130; it reads RSVTY.

The protein belongs to the MAPEG family. In terms of assembly, homotrimer. Requires glutathione as cofactor.

The protein localises to the membrane. The protein resides in the cytoplasm. It localises to the perinuclear region. The enzyme catalyses prostaglandin H2 = prostaglandin E2. It carries out the reaction 2-glyceryl-prostaglandin H2 = 2-glyceryl-prostaglandin E2. It catalyses the reaction prostaglandin G2 = (15S)-15-hydroperoxy-prostaglandin E2. The catalysed reaction is 1-chloro-2,4-dinitrobenzene + glutathione = 2,4-dinitrophenyl-S-glutathione + chloride + H(+). The enzyme catalyses (5S)-hydroperoxy-(6E,8Z,11Z,14Z)-eicosatetraenoate + 2 glutathione = (5S)-hydroxy-(6E,8Z,11Z,14Z)-eicosatetraenoate + glutathione disulfide + H2O. Its pathway is lipid metabolism; prostaglandin biosynthesis. Induced by interleukin IL1B. Its function is as follows. Terminal enzyme of the cyclooxygenase (COX)-2-mediated prostaglandin E2 (PGE2) biosynthetic pathway. Catalyzes the glutathione-dependent oxidoreduction of prostaglandin endoperoxide H2 (PGH2) to prostaglandin E2 (PGE2) in response to inflammatory stimuli. Plays a key role in inflammation response, fever and pain. Also catalyzes the oxidoreduction of endocannabinoids into prostaglandin glycerol esters and PGG2 into 15-hydroperoxy-PGE2. In addition, displays low glutathione transferase and glutathione-dependent peroxidase activities, toward 1-chloro-2,4-dinitrobenzene and 5-hydroperoxyicosatetraenoic acid (5-HPETE), respectively. This is Prostaglandin E synthase (PTGES) from Homo sapiens (Human).